Consider the following 57-residue polypeptide: COP9 signalosome complex subunit 9 (57 aa).

Thr-26 is modified (phosphothreonine).

Belongs to the CSN9 family. Component of the CSN complex, composed of COPS1/GPS1, COPS2, COPS3, COPS4, COPS5, COPS6, COPS7 (COPS7A or COPS7B), COPS8 and COPS9. In the complex, it interacts directly with COPS3, COPS5 and COPS6.

Its subcellular location is the nucleus. It is found in the cytoplasm. It localises to the nucleoplasm. Its function is as follows. Component of the COP9 signalosome complex (CSN), a complex involved in various cellular and developmental processes. The CSN complex is an essential regulator of the ubiquitin (Ubl) conjugation pathway by mediating the deneddylation of the cullin subunits of SCF-type E3 ligase complexes, leading to decrease the Ubl ligase activity of SCF-type complexes such as SCF, CSA or DDB2. The complex is also involved in phosphorylation of p53/TP53, c-jun/JUN, IkappaBalpha/NFKBIA, ITPK1 and IRF8/ICSBP, possibly via its association with CK2 and PKD kinases. CSN-dependent phosphorylation of TP53 and JUN promotes and protects degradation by the Ubl system, respectively. Plays a role in cell proliferation. The chain is COP9 signalosome complex subunit 9 from Bos taurus (Bovine).